The primary structure comprises 210 residues: N-(5'-phosphoribosyl)anthranilate isomerase (210 aa).

The protein belongs to the TrpF family.

It carries out the reaction N-(5-phospho-beta-D-ribosyl)anthranilate = 1-(2-carboxyphenylamino)-1-deoxy-D-ribulose 5-phosphate. Its pathway is amino-acid biosynthesis; L-tryptophan biosynthesis; L-tryptophan from chorismate: step 3/5. This Methanococcus aeolicus (strain ATCC BAA-1280 / DSM 17508 / OCM 812 / Nankai-3) protein is N-(5'-phosphoribosyl)anthranilate isomerase.